A 132-amino-acid chain; its full sequence is Fatty acid-binding protein 1 (132 aa).

Residues arginine 106 and 128–130 contribute to the a fatty acid site; that span reads RYY.

It belongs to the calycin superfamily. Fatty-acid binding protein (FABP) family. Monomer. In terms of tissue distribution, midgut.

It is found in the cytoplasm. Binds fatty acids in a 1:1 molar ratio. This is Fatty acid-binding protein 1 (MFB1) from Manduca sexta (Tobacco hawkmoth).